Reading from the N-terminus, the 1253-residue chain is Latent-transforming growth factor beta-binding protein 3 (1253 aa).

Positions 1–38 are cleaved as a signal peptide; sequence MPGPRGAAHGLAPAMRQAGALGLLALLLLALLGPGGGA. Asn-86 carries an N-linked (GlcNAc...) asparagine glycan. In terms of domain architecture, EGF-like 1 spans 106 to 138; that stretch reads RVVVCPLPCMNGGQCSSRNQCLCPPDFTGRFCQ. 3 cysteine pairs are disulfide-bonded: Cys-110–Cys-120, Cys-114–Cys-126, and Cys-128–Cys-137. The tract at residues 244–270 is disordered; the sequence is GPNAEGPASSQHLLPHPKPQHPRPPTQ. One can recognise a TB 1 domain in the interval 274 to 328; the sequence is GRCFQDTLPKQPCGSNPLPGLTKQEDCCGSIGTAWGQSKCHKCPQLQYTGVQKPG. Cystine bridges form between Cys-276–Cys-300, Cys-286–Cys-313, and Cys-301–Cys-316. Asn-346 is a glycosylation site (N-linked (GlcNAc...) asparagine). The EGF-like 2; calcium-binding domain maps to 352–392; the sequence is DINECAMPGMCRHGDCLNNPGSYRCVCPPGHSLGPSRTQCI. Intrachain disulfides connect Cys-356-Cys-367, Cys-362-Cys-376, Cys-378-Cys-391, Cys-402-Cys-425, Cys-412-Cys-437, Cys-426-Cys-440, and Cys-427-Cys-452. Residues 400 to 452 enclose the TB 2 domain; that stretch reads SLCFRLVSTEHQCQHPLTTRLTRQLCCCSVGKAWGARCQRCPADGTAAFKEIC. The segment at 475 to 555 is disordered; sequence FSLFLHPDGP…PTFHRFLPDL (81 aa). Residues 571–612 form the EGF-like 3 domain; the sequence is ETDECRLNQNICGHGQCVPGPSDYSCHCNAGYRSHPQHRYCV. 32 disulfide bridges follow: Cys-575–Cys-587, Cys-582–Cys-596, Cys-598–Cys-611, Cys-617–Cys-629, Cys-622–Cys-638, Cys-661–Cys-673, Cys-667–Cys-682, Cys-684–Cys-698, Cys-745–Cys-756, Cys-751–Cys-765, Cys-767–Cys-780, Cys-786–Cys-797, Cys-792–Cys-806, Cys-808–Cys-821, Cys-827–Cys-838, Cys-833–Cys-847, Cys-849–Cys-861, Cys-867–Cys-880, Cys-874–Cys-889, Cys-891–Cys-904, Cys-916–Cys-939, Cys-926–Cys-951, Cys-940–Cys-956, Cys-941–Cys-968, Cys-994–Cys-1007, Cys-1002–Cys-1016, Cys-1018–Cys-1031, Cys-1037–Cys-1048, Cys-1043–Cys-1057, Cys-1059–Cys-1072, Cys-1113–Cys-1127, and Cys-1114–Cys-1136. Residues 613 to 656 form the EGF-like 4; calcium-binding domain; the sequence is DVNECEAEPCGPGKGICMNTGGSYNCHCNRGYRLHVGAGGRSCV. The region spanning 657 to 699 is the EGF-like 5; calcium-binding domain; the sequence is DLNECTKPHLCGDGGFCINFPGHYKCNCYPGYRLKASRPPICE. The 41-residue stretch at 741–781 folds into the EGF-like 6; calcium-binding domain; sequence DVNECSEGTPCSPGWCENLPGSYRCTCAQGYEPAQDGLSCI. An EGF-like 7; calcium-binding domain is found at 782 to 822; the sequence is DVDECEAGKVCQDGICTNTPGSFQCQCLSGYHLSRDRSRCE. Residues 823–861 form the EGF-like 8; calcium-binding domain; the sequence is DIDECDFPAACIGGDCINTNGSYRCLCPQGHRLVGGRKC. Residue Asn-842 is glycosylated (N-linked (GlcNAc...) asparagine). Positions 863–905 constitute an EGF-like 9; calcium-binding domain; that stretch reads DIDECSQDPGLCLPHGACENLQGSYVCVCDEGFTLTQDQHGCE. The 55-residue stretch at 914-968 folds into the TB 3 domain; the sequence is KECYLNFDDTVFCDSVLATNVTQQECCCSLGAGWGDHCEIYPCPVYSSAEFHSLC. Asn-933 is a glycosylation site (N-linked (GlcNAc...) asparagine). The EGF-like 10; calcium-binding domain occupies 990–1032; the sequence is DIDECILFGAEICKEGKCVNTQPGYECYCKQGFYYDGNLLECV. The region spanning 1033-1072 is the EGF-like 11; calcium-binding domain; that stretch reads DVDECLDESNCRNGVCENTRGGYRCACTPPAEYSPAQRQC. In terms of domain architecture, TB 4 spans 1086 to 1136; it reads EVCWGQRGEDGMCMGPLAGPALTFDDCCCRQGRGWGTQCRPCPPRGTGSQC. Residues 1138-1148 show a composition bias toward polar residues; sequence TSQSESNSFWD. Positions 1138 to 1169 are disordered; sequence TSQSESNSFWDTSPLLLGKSPRDEDSSEEDSD. The EGF-like 12; calcium-binding domain maps to 1204 to 1231; it reads DIDECRELNQRGLLCKSERCVNTSGSFR. 2 disulfides stabilise this stretch: Cys-1208–Cys-1223 and Cys-1218–Cys-1232. N-linked (GlcNAc...) asparagine glycosylation occurs at Asn-1225.

Belongs to the LTBP family. In terms of assembly, forms part of the large latent transforming growth factor beta (TGFB1) precursor complex; removal is essential for activation of complex. Interacts with EFEMP2. Contains hydroxylated asparagine residues. In terms of processing, two intrachain disulfide bonds from the TB3 domain are rearranged upon TGFB1 binding, and form interchain bonds with TGFB1 propeptide, anchoring it to the extracellular matrix.

The protein resides in the secreted. It is found in the extracellular space. It localises to the extracellular matrix. Key regulator of transforming growth factor beta (TGFB1, TGFB2 and TGFB3) that controls TGF-beta activation by maintaining it in a latent state during storage in extracellular space. Associates specifically via disulfide bonds with the Latency-associated peptide (LAP), which is the regulatory chain of TGF-beta, and regulates integrin-dependent activation of TGF-beta. In Mus musculus (Mouse), this protein is Latent-transforming growth factor beta-binding protein 3 (Ltbp3).